A 102-amino-acid chain; its full sequence is Large ribosomal subunit protein bL21 (102 aa).

It belongs to the bacterial ribosomal protein bL21 family. Part of the 50S ribosomal subunit. Contacts protein L20.

This protein binds to 23S rRNA in the presence of protein L20. In Phytoplasma australiense, this protein is Large ribosomal subunit protein bL21.